The sequence spans 90 residues: MSITSEKKKSLINIYAIKEDDTGSSFVQCAILTERISNLTEHFKVHKHDHHSKRGLLILIGRRRKHLNYIKRKFGNEAYQELIEKLGIRK.

It belongs to the universal ribosomal protein uS15 family. Part of the 30S ribosomal subunit. Forms a bridge to the 50S subunit in the 70S ribosome, contacting the 23S rRNA.

Functionally, one of the primary rRNA binding proteins, it binds directly to 16S rRNA where it helps nucleate assembly of the platform of the 30S subunit by binding and bridging several RNA helices of the 16S rRNA. In terms of biological role, forms an intersubunit bridge (bridge B4) with the 23S rRNA of the 50S subunit in the ribosome. The polypeptide is Small ribosomal subunit protein uS15 (Wolbachia sp. subsp. Drosophila simulans (strain wRi)).